A 129-amino-acid chain; its full sequence is Large ribosomal subunit protein bL20 (129 aa).

This sequence belongs to the bacterial ribosomal protein bL20 family.

In terms of biological role, binds directly to 23S ribosomal RNA and is necessary for the in vitro assembly process of the 50S ribosomal subunit. It is not involved in the protein synthesizing functions of that subunit. The protein is Large ribosomal subunit protein bL20 of Mycobacteroides abscessus (strain ATCC 19977 / DSM 44196 / CCUG 20993 / CIP 104536 / JCM 13569 / NCTC 13031 / TMC 1543 / L948) (Mycobacterium abscessus).